The following is a 241-amino-acid chain: NAD-dependent protein deacylase (241 aa).

Positions 1–237 (MNFPYRNIVV…PKLVDEILAL (237 aa)) constitute a Deacetylase sirtuin-type domain. An NAD(+)-binding site is contributed by 13–32 (GAGISAESGIQTFRAQDGLW). Positions 57 and 60 each coordinate substrate. 94–97 (QNID) provides a ligand contact to NAD(+). Residue His112 is the Proton acceptor of the active site. Positions 120 and 139 each coordinate Zn(2+). Residues 179–181 (GTS), 205–207 (NLE), and Ala223 contribute to the NAD(+) site.

The protein belongs to the sirtuin family. Class III subfamily. Monomer. Zn(2+) serves as cofactor.

Its subcellular location is the cytoplasm. It is found in the host cytoplasm. It localises to the host cytosol. The protein localises to the host nucleus. It catalyses the reaction N(6)-acetyl-L-lysyl-[protein] + NAD(+) + H2O = 2''-O-acetyl-ADP-D-ribose + nicotinamide + L-lysyl-[protein]. It carries out the reaction N(6)-succinyl-L-lysyl-[protein] + NAD(+) + H2O = 2''-O-succinyl-ADP-D-ribose + nicotinamide + L-lysyl-[protein]. Its function is as follows. NAD-dependent lysine deacetylase and desuccinylase that specifically removes acetyl and succinyl groups on target proteins. Modulates the activities of several proteins which are inactive in their acylated form. In the intracellular pathogen V.parahaemolyticus, this enzyme regulates host response during infection by induction of host histone deacetylation; it specifically causes deacetylation of histone lysine residues H3K56, H3K9, H3K18 and H4K16 which results in transcriptional repression of several host genes involved in epigenetic regulation, immune response, and autophagy. This chain is NAD-dependent protein deacylase, found in Vibrio parahaemolyticus serotype O3:K6 (strain RIMD 2210633).